Consider the following 332-residue polypeptide: Ribosomal RNA small subunit methyltransferase C (332 aa).

Belongs to the methyltransferase superfamily. RsmC family. Monomer.

Its subcellular location is the cytoplasm. It catalyses the reaction guanosine(1207) in 16S rRNA + S-adenosyl-L-methionine = N(2)-methylguanosine(1207) in 16S rRNA + S-adenosyl-L-homocysteine + H(+). In terms of biological role, specifically methylates the guanine in position 1207 of 16S rRNA in the 30S particle. The chain is Ribosomal RNA small subunit methyltransferase C from Pseudomonas aeruginosa (strain UCBPP-PA14).